The chain runs to 139 residues: MDHDKLEANLLDHALTKYLKSTKQLDEATVPKHVNNVRGFILRIIYRHGSCTIKDILKEVTLSPSATTTALNHLEQEGFIERSRNNNDRRTVWITLSESGRGAAEQMIENRQQLIDGMFERLTAEEKKTFLAIIAKLAQ.

The HTH marR-type domain maps to 8–139 (ANLLDHALTK…FLAIIAKLAQ (132 aa)). The segment at residues 53-76 (IKDILKEVTLSPSATTTALNHLEQ) is a DNA-binding region (H-T-H motif).

This is an uncharacterized protein from Bacillus subtilis (strain 168).